Consider the following 134-residue polypeptide: Protein E6 (134 aa).

2 zinc fingers span residues 15-51 (CLQCKKALGSLDALKCKNHKYRRVHRGGKPYGMCQIC) and 88-124 (CYYCGCVLSDSEKDRHALDHEGYLYVRGRARGRCYSC).

The protein belongs to the papillomaviridae E6 protein family. In terms of assembly, forms homodimers. Interacts with ubiquitin-protein ligase UBE3A/E6-AP; this interaction stimulates UBE3A ubiquitin activity. Interacts with host BAK1.

Its subcellular location is the host cytoplasm. It localises to the host nucleus. Plays a major role in the induction and maintenance of cellular transformation. E6 associates with host UBE3A/E6-AP ubiquitin-protein ligase and modulates its activity. Protects host keratinocytes from apoptosis by mediating the degradation of host BAK1. May also inhibit host immune response. This chain is Protein E6, found in Bos taurus (Bovine).